A 213-amino-acid polypeptide reads, in one-letter code: 3-isopropylmalate dehydratase small subunit (213 aa).

The protein belongs to the LeuD family. LeuD type 1 subfamily. In terms of assembly, heterodimer of LeuC and LeuD.

The enzyme catalyses (2R,3S)-3-isopropylmalate = (2S)-2-isopropylmalate. It functions in the pathway amino-acid biosynthesis; L-leucine biosynthesis; L-leucine from 3-methyl-2-oxobutanoate: step 2/4. In terms of biological role, catalyzes the isomerization between 2-isopropylmalate and 3-isopropylmalate, via the formation of 2-isopropylmaleate. The protein is 3-isopropylmalate dehydratase small subunit of Magnetococcus marinus (strain ATCC BAA-1437 / JCM 17883 / MC-1).